The following is a 362-amino-acid chain: Peptide chain release factor 1 (362 aa).

An N5-methylglutamine modification is found at Gln-237. The interval 289–308 (AAEISDTRRNLLGSGDRSDR) is disordered.

Belongs to the prokaryotic/mitochondrial release factor family. Methylated by PrmC. Methylation increases the termination efficiency of RF1.

It localises to the cytoplasm. Peptide chain release factor 1 directs the termination of translation in response to the peptide chain termination codons UAG and UAA. This is Peptide chain release factor 1 from Vibrio cholerae serotype O1 (strain ATCC 39541 / Classical Ogawa 395 / O395).